Reading from the N-terminus, the 233-residue chain is Lipid A 4'-phosphatase (233 aa).

Residue Met-1 is a topological domain, cytoplasmic. Residues 2–22 (LLFWMWWALLAVFRAFPGIDI) form a helical membrane-spanning segment. Over 23–60 (YFSQLFFVGADCDATAAAGNICGGFPYRDVAAFDLLRT) the chain is Extracellular. Residues 61-81 (VFFRLPYVVAIVMVWKLVECY) form a helical membrane-spanning segment. Over 82–94 (QQHGATFNAERAQ) the chain is Cytoplasmic. Residues 95-115 (KLKVALGTLLIGPVLLVNVVL) form a helical membrane-spanning segment. The Extracellular segment spans residues 116–149 (KEHWGRPRPIQTDIFGGALHFAEAGSLAGKCVSN). The helical transmembrane segment at 150–170 (CSFVSGEAASAGWLFCLLLFV) threads the bilayer. Residues 171 to 176 (PKSLRY) are Cytoplasmic-facing. The chain crosses the membrane as a helical span at residues 177-197 (AVAAPLAAISILTPAMRLSFG). Residues 198-200 (AHY) lie on the Extracellular side of the membrane. The helical transmembrane segment at 201-221 (LSDVVLGWLSSLVVFAALLAL) threads the bilayer. The Cytoplasmic portion of the chain corresponds to 222-233 (TESQQHQKNSEI).

This sequence belongs to the lipid A LpxF 4'-phosphatase family.

It localises to the cell inner membrane. It functions in the pathway bacterial outer membrane biogenesis; LPS lipid A biosynthesis. Its function is as follows. Removes the 4'-phosphate moiety from lipid IV(A) (a tetraacylated precursor of lipid A). In Rhizobium leguminosarum, this protein is Lipid A 4'-phosphatase.